The primary structure comprises 216 residues: Orotate phosphoribosyltransferase (216 aa).

5-phospho-alpha-D-ribose 1-diphosphate is bound by residues Arg101, Lys105, His107, and 127 to 135 (EDLISTGGS). Residue Ser131 participates in orotate binding.

The protein belongs to the purine/pyrimidine phosphoribosyltransferase family. PyrE subfamily. Homodimer. Mg(2+) serves as cofactor.

The catalysed reaction is orotidine 5'-phosphate + diphosphate = orotate + 5-phospho-alpha-D-ribose 1-diphosphate. Its pathway is pyrimidine metabolism; UMP biosynthesis via de novo pathway; UMP from orotate: step 1/2. In terms of biological role, catalyzes the transfer of a ribosyl phosphate group from 5-phosphoribose 1-diphosphate to orotate, leading to the formation of orotidine monophosphate (OMP). This Cutibacterium acnes (strain DSM 16379 / KPA171202) (Propionibacterium acnes) protein is Orotate phosphoribosyltransferase.